Here is a 301-residue protein sequence, read N- to C-terminus: Large ribosomal subunit protein uL18 (301 aa).

This sequence belongs to the universal ribosomal protein uL18 family. Component of the large ribosomal subunit (LSU). Mature N.crassa ribosomes consist of a small (40S) and a large (60S) subunit. The 40S small subunit contains 1 molecule of ribosomal RNA (18S rRNA) and at least 32 different proteins. The large 60S subunit contains 3 rRNA molecules (26S, 5.8S and 5S rRNA) and at least 42 different proteins.

It localises to the cytoplasm. Component of the ribosome, a large ribonucleoprotein complex responsible for the synthesis of proteins in the cell. The small ribosomal subunit (SSU) binds messenger RNAs (mRNAs) and translates the encoded message by selecting cognate aminoacyl-transfer RNA (tRNA) molecules. The large subunit (LSU) contains the ribosomal catalytic site termed the peptidyl transferase center (PTC), which catalyzes the formation of peptide bonds, thereby polymerizing the amino acids delivered by tRNAs into a polypeptide chain. The nascent polypeptides leave the ribosome through a tunnel in the LSU and interact with protein factors that function in enzymatic processing, targeting, and the membrane insertion of nascent chains at the exit of the ribosomal tunnel. The polypeptide is Large ribosomal subunit protein uL18 (rpl-5) (Neurospora crassa (strain ATCC 24698 / 74-OR23-1A / CBS 708.71 / DSM 1257 / FGSC 987)).